The chain runs to 162 residues: MNLYIDLQIASENTVGLPTAAQFQHWVDKALAMEAKTADYPETEITIRIVDEAESHELNLTYRGKDKPTNVLSFPFEVPEGIQLPLLGDLIICRQVVEKEAVEQEKPLEAHWAHLAIHGTLHLLGYDHLTDEEAEEMESLETEIMQSLGFDDPYIAEKTIEE.

Positions 118, 122, and 128 each coordinate Zn(2+).

Belongs to the endoribonuclease YbeY family. Requires Zn(2+) as cofactor.

It is found in the cytoplasm. Single strand-specific metallo-endoribonuclease involved in late-stage 70S ribosome quality control and in maturation of the 3' terminus of the 16S rRNA. This chain is Endoribonuclease YbeY, found in Glaesserella parasuis serovar 5 (strain SH0165) (Haemophilus parasuis).